Consider the following 147-residue polypeptide: Sec-independent protein translocase protein TatB (147 aa).

The helical transmembrane segment at 1 to 21 threads the bilayer; that stretch reads MFDFGFSELIVIAVVTLIVVG. Residues 117–147 are disordered; the sequence is APAPMSLAPHGDAASAGREPAAVPGSGPEKA.

Belongs to the TatB family. The Tat system comprises two distinct complexes: a TatABC complex, containing multiple copies of TatA, TatB and TatC subunits, and a separate TatA complex, containing only TatA subunits. Substrates initially bind to the TatABC complex, which probably triggers association of the separate TatA complex to form the active translocon.

It is found in the cell inner membrane. In terms of biological role, part of the twin-arginine translocation (Tat) system that transports large folded proteins containing a characteristic twin-arginine motif in their signal peptide across membranes. Together with TatC, TatB is part of a receptor directly interacting with Tat signal peptides. TatB may form an oligomeric binding site that transiently accommodates folded Tat precursor proteins before their translocation. In Aromatoleum aromaticum (strain DSM 19018 / LMG 30748 / EbN1) (Azoarcus sp. (strain EbN1)), this protein is Sec-independent protein translocase protein TatB.